Reading from the N-terminus, the 1409-residue chain is Adhesion and penetration protein autotransporter (1409 aa).

A signal peptide spans M1–A25. One can recognise a Peptidase S6 domain in the interval G26 to E294. S250 is an active-site residue. 2 disordered regions span residues Y866 to S888 and A1016 to A1078. Residues V1057–K1067 are compositionally biased toward polar residues. Positions P1068–R1077 are enriched in basic residues. Residues V1156 to W1409 form the Autotransporter domain.

Its subcellular location is the periplasm. It localises to the secreted. It is found in the cell surface. The protein localises to the cell outer membrane. Functionally, probable protease; promotes adherence and invasion by directly binding to a host cell structure. The polypeptide is Adhesion and penetration protein autotransporter (hap) (Haemophilus influenzae (strain ATCC 51907 / DSM 11121 / KW20 / Rd)).